A 192-amino-acid chain; its full sequence is uncharacterized protein (192 aa).

This is an uncharacterized protein from Acanthamoeba polyphaga mimivirus (APMV).